The sequence spans 626 residues: SHC-transforming protein 4 (626 aa).

A CH2 region spans residues 1–185 (MRERSQDSQA…KQDGPPLQHL (185 aa)). 2 disordered regions span residues 38-76 (ITSL…TVSS) and 119-182 (LQEN…GPPL). Positions 120–139 (QENQDQTPSRPASPESNLNR) are enriched in polar residues. In terms of domain architecture, PID spans 186-369 (LGNGLNYCVR…LVDGAPEDRD (184 aa)). Residues 370–521 (HDYYNSIPGK…HIRQQLWDEE (152 aa)) form a CH1 region. Y422 is subject to Phosphotyrosine. The 92-residue stretch at 522–613 (CFHGKLSRGA…GSEVRLKQPI (92 aa)) folds into the SH2 domain.

In terms of assembly, interacts (via PID domain) with phosphorylated MUSK (via NPXY motif); undergoes tyrosine phosphorylation downstream of activated MUSK. Interacts with GRB2; the interaction is dependent of Tyr-422 phosphorylation and increased by EGF. In terms of processing, phosphorylated; the phosphorylation is enhanced by EGF. Phosphorylation at Tyr-422 is required for the interaction with GRB2. Expressed in both brain and skeletal muscle; widely expressed in brain namely olfactory bulb, cortex, hippocampus, striatum, thalamus, and brain stem (at protein level). Only expressed in melanomas. Weakly expressed in normal melanocytes and benign nevi. Highly expressed at the transition from radial growth phase to vertical growth phase and metastatic melanomas, when tumor cells acquire migratory competence and invasive potential.

It localises to the postsynaptic cell membrane. In terms of biological role, activates both Ras-dependent and Ras-independent migratory pathways in melanomas. Contributes to the early phases of agrin-induced tyrosine phosphorylation of CHRNB1. In Mus musculus (Mouse), this protein is SHC-transforming protein 4 (Shc4).